The chain runs to 274 residues: 2,3,4,5-tetrahydropyridine-2,6-dicarboxylate N-succinyltransferase (274 aa).

Residues arginine 104 and aspartate 141 each contribute to the substrate site.

Belongs to the transferase hexapeptide repeat family. Homotrimer.

Its subcellular location is the cytoplasm. It carries out the reaction (S)-2,3,4,5-tetrahydrodipicolinate + succinyl-CoA + H2O = (S)-2-succinylamino-6-oxoheptanedioate + CoA. Its pathway is amino-acid biosynthesis; L-lysine biosynthesis via DAP pathway; LL-2,6-diaminopimelate from (S)-tetrahydrodipicolinate (succinylase route): step 1/3. This Yersinia pestis protein is 2,3,4,5-tetrahydropyridine-2,6-dicarboxylate N-succinyltransferase.